Here is a 90-residue protein sequence, read N- to C-terminus: Molybdopterin synthase sulfur carrier subunit (90 aa).

Position 90 is a 1-thioglycine; alternate (Gly-90). Gly-90 is subject to Glycyl adenylate; alternate.

The protein belongs to the MoaD family. MOCS2A subfamily. As to quaternary structure, heterotetramer; composed of 2 small (Mocs2A) and 2 large (Mocs2B) subunits. Post-translationally, C-terminal thiocarboxylation occurs in 2 steps, it is first acyl-adenylated (-COAMP) via the hesA/moeB/thiF part of MOCS3, then thiocarboxylated (-COSH) via the rhodanese domain of MOCS3.

Its subcellular location is the cytoplasm. It participates in cofactor biosynthesis; molybdopterin biosynthesis. In terms of biological role, acts as a sulfur carrier required for molybdopterin biosynthesis. Component of the molybdopterin synthase complex that catalyzes the conversion of precursor Z into molybdopterin by mediating the incorporation of 2 sulfur atoms into precursor Z to generate a dithiolene group. In the complex, serves as sulfur donor by being thiocarboxylated (-COSH) at its C-terminus by MOCS3. After interaction with Mocs2B, the sulfur is then transferred to precursor Z to form molybdopterin. This Drosophila simulans (Fruit fly) protein is Molybdopterin synthase sulfur carrier subunit.